Reading from the N-terminus, the 238-residue chain is Testis-specific gene A8 protein (238 aa).

Residues 35 to 238 (GKGAKTNKRG…GEAVATTTMT (204 aa)) form a disordered region. The segment covering 39-48 (KTNKRGKRGG) has biased composition (basic residues). Tandem repeats lie at residues 79–93 (AAAA…PESS), 94–108 (AAAA…PESS), 109–123 (AAAA…PESS), 124–138 (AAAA…LESS), 153–158 (PAAPEA), 171–176 (PAAPEA), 180–185 (PAAPEA), and 189–194 (PAAPEA). Residues 79-148 (AAAAAPEAAA…AAAAAPEAAA (70 aa)) are 4 X 15 AA tandem repeats of A-A-A-A-A-P-E-A-A-A-S-[PL]-E-S-S. 2 stretches are compositionally biased toward low complexity: residues 79–200 (AAAA…AAPA) and 208–220 (WEAA…AAVK). Residues 153-194 (PAAPEAAAAPEVAAAPATPAAPEATAAPAAPEAATTPAAPEA) form a 4 X 6 AA repeats of P-A-A-P-E-A region.

As to expression, specifically expressed in testis (at protein level).

The protein resides in the cytoplasm. The protein localises to the nucleus. It is found in the nucleoplasm. The polypeptide is Testis-specific gene A8 protein (Mus musculus (Mouse)).